Here is a 448-residue protein sequence, read N- to C-terminus: Trigger factor (448 aa).

Residues 167–253 enclose the PPIase FKBP-type domain; sequence GSIVRVDFVE…IKDIKKRDIP (87 aa).

The protein belongs to the FKBP-type PPIase family. Tig subfamily.

It localises to the cytoplasm. It catalyses the reaction [protein]-peptidylproline (omega=180) = [protein]-peptidylproline (omega=0). Functionally, involved in protein export. Acts as a chaperone by maintaining the newly synthesized protein in an open conformation. Functions as a peptidyl-prolyl cis-trans isomerase. This is Trigger factor from Borrelia hermsii (strain HS1 / DAH).